A 337-amino-acid chain; its full sequence is uncharacterized protein (337 aa).

Positions 3 to 174 (IAVRGGHNFK…IGKLIAEAIN (172 aa)) constitute a MurNAc-LAA domain.

The protein to C.perfringens pIP404 ORF10.

This is an uncharacterized protein from Clostridium perfringens (strain 13 / Type A).